Consider the following 215-residue polypeptide: Pyridoxine/pyridoxamine 5'-phosphate oxidase (215 aa).

Residues 9-12 (RRDY) and Lys69 contribute to the substrate site. FMN is bound by residues 64 to 69 (RVLLLK), 79 to 80 (FS), Lys86, and Gln108. Substrate-binding residues include Tyr126, Arg130, and Ser134. Residues 143-144 (QS) and Trp188 contribute to the FMN site. Substrate is bound at residue 194–196 (RLH). Arg198 contributes to the FMN binding site.

Belongs to the pyridoxamine 5'-phosphate oxidase family. In terms of assembly, homodimer. Requires FMN as cofactor.

The enzyme catalyses pyridoxamine 5'-phosphate + O2 + H2O = pyridoxal 5'-phosphate + H2O2 + NH4(+). The catalysed reaction is pyridoxine 5'-phosphate + O2 = pyridoxal 5'-phosphate + H2O2. It participates in cofactor metabolism; pyridoxal 5'-phosphate salvage; pyridoxal 5'-phosphate from pyridoxamine 5'-phosphate: step 1/1. Its pathway is cofactor metabolism; pyridoxal 5'-phosphate salvage; pyridoxal 5'-phosphate from pyridoxine 5'-phosphate: step 1/1. Its function is as follows. Catalyzes the oxidation of either pyridoxine 5'-phosphate (PNP) or pyridoxamine 5'-phosphate (PMP) into pyridoxal 5'-phosphate (PLP). In Azotobacter vinelandii (strain DJ / ATCC BAA-1303), this protein is Pyridoxine/pyridoxamine 5'-phosphate oxidase.